The sequence spans 178 residues: Cytochrome b6-f complex iron-sulfur subunit (178 aa).

The chain crosses the membrane as a helical span at residues 20-42 (LLTFGTATGVALGALYPVANYFM). Positions 65 to 161 (KTGWLATHQA…VDIEDDAVLV (97 aa)) constitute a Rieske domain. Positions 107, 109, 125, and 128 each coordinate [2Fe-2S] cluster. Cys112 and Cys127 are oxidised to a cystine.

This sequence belongs to the Rieske iron-sulfur protein family. The 4 large subunits of the cytochrome b6-f complex are cytochrome b6, subunit IV (17 kDa polypeptide, PetD), cytochrome f and the Rieske protein, while the 4 small subunits are PetG, PetL, PetM and PetN. The complex functions as a dimer. It depends on [2Fe-2S] cluster as a cofactor.

It localises to the cellular thylakoid membrane. It catalyses the reaction 2 oxidized [plastocyanin] + a plastoquinol + 2 H(+)(in) = 2 reduced [plastocyanin] + a plastoquinone + 4 H(+)(out). Functionally, component of the cytochrome b6-f complex, which mediates electron transfer between photosystem II (PSII) and photosystem I (PSI), cyclic electron flow around PSI, and state transitions. This Prochlorococcus marinus (strain MIT 9312) protein is Cytochrome b6-f complex iron-sulfur subunit.